The primary structure comprises 641 residues: Threonine--tRNA ligase (641 aa).

In terms of domain architecture, TGS spans methionine 1–threonine 61. A catalytic region spans residues aspartate 242–proline 533. The Zn(2+) site is built by cysteine 333, histidine 384, and histidine 510.

It belongs to the class-II aminoacyl-tRNA synthetase family. Homodimer. Zn(2+) is required as a cofactor.

The protein localises to the cytoplasm. It catalyses the reaction tRNA(Thr) + L-threonine + ATP = L-threonyl-tRNA(Thr) + AMP + diphosphate + H(+). In terms of biological role, catalyzes the attachment of threonine to tRNA(Thr) in a two-step reaction: L-threonine is first activated by ATP to form Thr-AMP and then transferred to the acceptor end of tRNA(Thr). Also edits incorrectly charged L-seryl-tRNA(Thr). This chain is Threonine--tRNA ligase, found in Alkalilimnicola ehrlichii (strain ATCC BAA-1101 / DSM 17681 / MLHE-1).